Reading from the N-terminus, the 359-residue chain is MNIYDQLQPVEDRYEELGELLSDPYVVSDTKRFMELSREEANTRETVTAYREYKQVIQNISDAEEMIKDASGDAELEEMAKEELKESKAAKEEYEERLKILLLPKDPNDDKNIILEIRGAAGGDEAALFAGDLLTMYQKYAETQGWRFEVMESSVNGVGGIKEVVAMVSGQSVYSKLKYESGAHRVQRVPVTESQGRVHTSTATVLVMPEVEEVEYEIDQKDLRADIYHASGAGGQNVNKVATAVRMVHIPTGIKVEMQEERTQQKNRDKAMKIIRARVADHFAQIAQDEQDAERKSTVGTGDRSERIRTYNFPQNRVTDHRIGLTLQKLDTILSGKMDEVIDALVMYDQTQKLEALNK.

Q236 carries the post-translational modification N5-methylglutamine.

The protein belongs to the prokaryotic/mitochondrial release factor family. Post-translationally, methylated by PrmC. Methylation increases the termination efficiency of RF1.

The protein resides in the cytoplasm. In terms of biological role, peptide chain release factor 1 directs the termination of translation in response to the peptide chain termination codons UAG and UAA. This chain is Peptide chain release factor 1, found in Streptococcus agalactiae.